A 345-amino-acid polypeptide reads, in one-letter code: S-adenosylmethionine:tRNA ribosyltransferase-isomerase (345 aa).

The protein belongs to the QueA family. As to quaternary structure, monomer.

The protein localises to the cytoplasm. The enzyme catalyses 7-aminomethyl-7-carbaguanosine(34) in tRNA + S-adenosyl-L-methionine = epoxyqueuosine(34) in tRNA + adenine + L-methionine + 2 H(+). It participates in tRNA modification; tRNA-queuosine biosynthesis. In terms of biological role, transfers and isomerizes the ribose moiety from AdoMet to the 7-aminomethyl group of 7-deazaguanine (preQ1-tRNA) to give epoxyqueuosine (oQ-tRNA). This chain is S-adenosylmethionine:tRNA ribosyltransferase-isomerase, found in Helicobacter pylori (strain J99 / ATCC 700824) (Campylobacter pylori J99).